Reading from the N-terminus, the 1465-residue chain is Vacuolar heme ABC transmembrane exporter abc3 (1465 aa).

The Extracellular portion of the chain corresponds to 1-8 (MITANKGL). The chain crosses the membrane as a helical span at residues 9–29 (SLVLLIPNLFALVSGGLQYVF). The Cytoplasmic segment spans residues 30–42 (DVRRRIFRPHFSQ). A helical membrane pass occupies residues 43–63 (FWTIWMKFFSIALVIITQIYV). Residues 64–69 (GYKTKN) lie on the Extracellular side of the membrane. Residues 70–90 (IGWNFFSVVTYCFVLFLQFAE) traverse the membrane as a helical segment. Topologically, residues 91–97 (QSTLRVP) are cytoplasmic. A helical membrane pass occupies residues 98–118 (MASLLIFWLLKVVTSLLILLF). Residues 119 to 129 (SPYIAITSMAR) are Extracellular-facing. The helical transmembrane segment at 130-150 (LLTLITLFCSLVCFISEVYVP) threads the bilayer. A heme-binding site is contributed by 151–152 (PC). At 151-235 (PCNRVWYSDD…IYHSKNKRRS (85 aa)) the chain is on the cytoplasmic side. A helical transmembrane segment spans residues 236–256 (LFLWKLLFFNHWKLVALITIT). The 290-residue stretch at 250–539 (VALITITKLI…LPTVISSLLE (290 aa)) folds into the ABC transmembrane type-1 1 domain. Topologically, residues 257-291 (KLIQDVLAFVQPTLIQKTILFISSYTSPNPESPSR) are extracellular. The chain crosses the membrane as a helical span at residues 292 to 312 (GFIIAILVLVANFLQTLLLQQ). At 313-362 (YNQLIMLLGMRWKTELLASIYRKSLLLSSSARQNRSIGDIINYMAVDTQK) the chain is on the cytoplasmic side. Residues 363 to 383 (ISDLPIYLFIIVSGPFQIALA) form a helical membrane-spanning segment. The Extracellular portion of the chain corresponds to 384–394 (LSNLYHLMGYS). A helical membrane pass occupies residues 395 to 415 (AFTGVAASVILFPCNIIVANV). Residues 416 to 480 (YKKFQSILMK…KIGFITAIGD (65 aa)) lie on the Cytoplasmic side of the membrane. A helical membrane pass occupies residues 481-501 (FAWIFTTIIVTTVAFGAFIIF). Residues 502-511 (HGKTQALTAD) lie on the Extracellular side of the membrane. The helical transmembrane segment at 512 to 532 (IVFPAVSLFNLLQFPLAMLPT) threads the bilayer. The Cytoplasmic portion of the chain corresponds to 533 to 899 (VISSLLEASV…VYWMYFKSCS (367 aa)). The 230-residue stretch at 575–804 (LEIKSGTFSW…TNSELKQQLS (230 aa)) folds into the ABC transporter 1 domain. 614–621 (GKVGAGKS) is a binding site for ATP. Disordered stretches follow at residues 805 to 824 (EFNDEKDTQPLPEHTTSYPS) and 840 to 869 (TYSSSERKDSSNKYKSRKRNPIRQKVTEDD). The chain crosses the membrane as a helical span at residues 900–920 (IGLILLYFFFIISGIMMNVAT). The ABC transmembrane type-1 2 domain occupies 903–1189 (ILLYFFFIIS…IVQQSVDAEN (287 aa)). Over 921–939 (NVWLKHWSEENGKSSSELN) the chain is Extracellular. The helical transmembrane segment at 940 to 960 (PSPYFYLGIYLFFGFLSCAFI) threads the bilayer. At 961–1033 (SSSSLTMTVL…FFFRNSIQVL (73 aa)) the chain is on the cytoplasmic side. The helical transmembrane segment at 1034-1054 (FILGVICYSAPLSLLLIVPLF) threads the bilayer. Topologically, residues 1055–1465 (FLYLYNRAYY…YSLAKESGLI (411 aa)) are extracellular. The region spanning 1226-1460 (VSFNHYSAKY…KDSMFYSLAK (235 aa)) is the ABC transporter 2 domain. 1260–1267 (GRTGAGKS) provides a ligand contact to ATP.

It belongs to the ABC transporter superfamily.

It localises to the vacuole membrane. Iron-regulated vacuolar transporter that mobilizes stored heme from the vacuole to the cytosol in response to iron deficiency. This is Vacuolar heme ABC transmembrane exporter abc3 from Schizosaccharomyces pombe (strain 972 / ATCC 24843) (Fission yeast).